The sequence spans 879 residues: Metabotropic glutamate receptor 3 (879 aa).

Residues 1-22 (MKMLTRLQVLMLALFSKGFLVS) form the signal peptide. Residues 23-576 (LGDHNFMRRE…EDYIRWEDAW (554 aa)) lie on the Extracellular side of the membrane. Cysteines 57 and 99 form a disulfide. Residues serine 151 and 172–174 (AST) each bind L-glutamate. Asparagine 209 carries an N-linked (GlcNAc...) asparagine glycan. Tyrosine 222 is a binding site for L-glutamate. Disulfide bonds link cysteine 240/cysteine 527, cysteine 361/cysteine 373, cysteine 412/cysteine 419, cysteine 509/cysteine 528, cysteine 513/cysteine 531, cysteine 534/cysteine 546, and cysteine 549/cysteine 562. Asparagine 292 carries an N-linked (GlcNAc...) asparagine glycan. Aspartate 301 provides a ligand contact to L-glutamate. Position 389 (lysine 389) interacts with L-glutamate. Residues asparagine 414 and asparagine 439 are each glycosylated (N-linked (GlcNAc...) asparagine). A helical membrane pass occupies residues 577–599 (AIGPVTIACLGFMCTCIVITVFI). The Cytoplasmic segment spans residues 600-613 (KHNNTPLVKASGRE). Residues 614–634 (LCYILLFGVSLSYCMTFFFIA) form a helical membrane-spanning segment. Residues 635–645 (KPSPVICALRR) lie on the Extracellular side of the membrane. The chain crosses the membrane as a helical span at residues 646-664 (LGLGTSFAICYSALLTKTN). Residues 665 to 688 (CIARIFDGVKNGAQRPKFISPSSQ) lie on the Cytoplasmic side of the membrane. Residues 689-709 (VFICLGLILVQIVMVSVWLIL) traverse the membrane as a helical segment. Over 710–734 (ETPGTRRYTLPEKRETVILKCNVKD) the chain is Extracellular. The chain crosses the membrane as a helical span at residues 735 to 756 (SSMLISLTYDVVLVILCTVYAF). At 757–769 (KTRKCPENFNEAK) the chain is on the cytoplasmic side. Residues 770 to 792 (FIGFTMYTTCIIWLAFLPIFYVT) traverse the membrane as a helical segment. The Extracellular segment spans residues 793–802 (SSDYRVQTTT). A helical membrane pass occupies residues 803–828 (MCISVSLSGFVVLGCLFAPKVHIVLF). The Cytoplasmic portion of the chain corresponds to 829-879 (QPQKNVVTHRLHLNRFSVSGTATTYSQSSASTYVPTVCNGREVLDSTTSSL).

It belongs to the G-protein coupled receptor 3 family. In terms of assembly, interacts with TAMALIN.

It is found in the cell membrane. G-protein coupled receptor for glutamate. Ligand binding causes a conformation change that triggers signaling via guanine nucleotide-binding proteins (G proteins) and modulates the activity of down-stream effectors. Signaling inhibits adenylate cyclase activity. The sequence is that of Metabotropic glutamate receptor 3 (Grm3) from Mus musculus (Mouse).